A 101-amino-acid chain; its full sequence is Chaperone modulatory protein CbpM (101 aa).

It belongs to the CbpM family.

Functionally, interacts with CbpA and inhibits both the DnaJ-like co-chaperone activity and the DNA binding activity of CbpA. Together with CbpA, modulates the activity of the DnaK chaperone system. Does not inhibit the co-chaperone activity of DnaJ. This is Chaperone modulatory protein CbpM from Pseudomonas putida (strain W619).